The chain runs to 143 residues: Protein STIG1 (143 aa).

The first 23 residues, 1-23, serve as a signal peptide directing secretion; that stretch reads MDFIILLIAILALSSTPITIISG. The tract at residues 76 to 87 is sufficient for PI(4)P binding; sequence RTCCFNYFCVDL. Residues 80 to 83 form a sufficient for binding to the extracellular domain of PRK2 region; it reads FNYF. Positions 88–115 are sufficient for PI(3)P binding; the sequence is FTNRFNCGSCGLVCIVGTRCCGGICVDI.

The protein belongs to the STIG1 family. As to quaternary structure, interacts with PRK1 and PRK2 (via extracellular domain). Expressed in the stigma and the upper section of the style.

It is found in the secreted. Its subcellular location is the extracellular space. It localises to the apoplast. Promotes pollen tube growth. A C-terminal peptide is cleaved from the propeptide in the stigmatic exudate and represent the major form of STIG1. Binds phosphoinositol lipids. The binding of external phosphatidylinositol 3-phosphate (PI(3)P) and PRK2 by STIG1 induces a rapid intracellular reactive oxygen species elevation. This chain is Protein STIG1, found in Solanum lycopersicum (Tomato).